The primary structure comprises 247 residues: Sec-independent protein translocase protein TatC (247 aa).

The next 5 membrane-spanning stretches (helical) occupy residues 21–41 (IILL…KPLI), 71–91 (AFII…WAFV), 109–129 (ITFL…FPFI), 154–174 (FLLQ…VIML), and 195–215 (FCLL…HLMI).

The protein belongs to the TatC family. Forms a complex with TatA.

Its subcellular location is the cell membrane. Part of the twin-arginine translocation (Tat) system that transports large folded proteins containing a characteristic twin-arginine motif in their signal peptide across membranes. This is Sec-independent protein translocase protein TatC from Listeria innocua serovar 6a (strain ATCC BAA-680 / CLIP 11262).